A 262-amino-acid chain; its full sequence is Small ribosomal subunit protein eS4 (262 aa).

One can recognise an S4 RNA-binding domain in the interval 42 to 105 (LPLVVFLRNR…NEHFRLVYDV (64 aa)). Residues 178 to 211 (GRLVMVTGGRNLGRVGVIVHREKHEGGFDLVHIK) enclose the KOW domain.

It belongs to the eukaryotic ribosomal protein eS4 family. Component of the small ribosomal subunit. Mature ribosomes consist of a small (40S) and a large (60S) subunit. The 40S subunit contains about 32 different proteins and 1 molecule of RNA (18S). The 60S subunit contains 45 different proteins and 3 molecules of RNA (25S, 5.8S and 5S).

The protein localises to the cytoplasm. In terms of biological role, component of the ribosome, a large ribonucleoprotein complex responsible for the synthesis of proteins in the cell. The small ribosomal subunit (SSU) binds messenger RNAs (mRNAs) and translates the encoded message by selecting cognate aminoacyl-transfer RNA (tRNA) molecules. The large subunit (LSU) contains the ribosomal catalytic site termed the peptidyl transferase center (PTC), which catalyzes the formation of peptide bonds, thereby polymerizing the amino acids delivered by tRNAs into a polypeptide chain. The nascent polypeptides leave the ribosome through a tunnel in the LSU and interact with protein factors that function in enzymatic processing, targeting, and the membrane insertion of nascent chains at the exit of the ribosomal tunnel. The sequence is that of Small ribosomal subunit protein eS4 (RPS42) from Candida albicans (strain SC5314 / ATCC MYA-2876) (Yeast).